A 439-amino-acid polypeptide reads, in one-letter code: Mitochondrial distribution and morphology protein 10 (439 aa).

The segment at 275–305 is disordered; sequence LPDATPPSFQVPSSSSSSSNPVSPSTSQPPT. Residues 280–305 are compositionally biased toward low complexity; sequence PPSFQVPSSSSSSSNPVSPSTSQPPT.

It belongs to the MDM10 family. As to quaternary structure, component of the ER-mitochondria encounter structure (ERMES) or MDM complex, composed of MMM1, MDM10, MDM12 and MDM34. Associates with the mitochondrial outer membrane sorting assembly machinery SAM(core) complex.

The protein localises to the mitochondrion outer membrane. In terms of biological role, component of the ERMES/MDM complex, which serves as a molecular tether to connect the endoplasmic reticulum and mitochondria. Components of this complex are involved in the control of mitochondrial shape and protein biogenesis and may function in phospholipid exchange. MDM10 is involved in the late assembly steps of the general translocase of the mitochondrial outer membrane (TOM complex). Functions in the TOM40-specific route of the assembly of outer membrane beta-barrel proteins, including the association of TOM40 with the receptor TOM22 and small TOM proteins. Can associate with the SAM(core) complex as well as the MDM12-MMM1 complex, both involved in late steps of the major beta-barrel assembly pathway, that is responsible for biogenesis of all outer membrane beta-barrel proteins. May act as a switch that shuttles between both complexes and channels precursor proteins into the TOM40-specific pathway. Plays a role in mitochondrial morphology and in the inheritance of mitochondria. The sequence is that of Mitochondrial distribution and morphology protein 10 from Laccaria bicolor (strain S238N-H82 / ATCC MYA-4686) (Bicoloured deceiver).